An 830-amino-acid chain; its full sequence is P-selectin (830 aa).

A signal peptide spans 1–41 (MANCQIAILYQRFQRVVFGISQLLCFSALISELTNQKEVAA). At 42-771 (WTYHYSTKAY…QAGPLTIQEA (730 aa)) the chain is on the extracellular side. 2 N-linked (GlcNAc...) asparagine glycosylation sites follow: N54 and N98. A C-type lectin domain is found at 58–158 (KYCQNRYTDL…HCLKKKHALC (101 aa)). 23 disulfide bridges follow: C60/C158, C131/C150, C163/C174, C168/C183, C185/C194, C200/C244, C230/C257, C262/C306, C292/C319, C324/C368, C354/C381, C386/C430, C416/C443, C448/C492, C478/C505, C510/C554, C540/C567, C572/C616, C602/C629, C642/C686, C672/C699, C704/C748, and C734/C761. The Ca(2+) site is built by E121, N123, and N124. Residue N123 coordinates a carbohydrate. Residues E133 and N146 each contribute to the a carbohydrate site. 2 residues coordinate Ca(2+): N146 and D147. The 37-residue stretch at 159 to 195 (YTASCQDMSCSKQGECLETIGNYTCSCYPGFYGPECE) folds into the EGF-like domain. An N-linked (GlcNAc...) asparagine glycan is attached at N180. Sushi domains follow at residues 198-259 (RECG…QCLA), 260-321 (AQCP…VCKA), 322-383 (VQCQ…TCEA), 384-445 (ISCE…VCQA), 446-507 (LQCQ…ECQA), 508-569 (IPCT…MCEA), 570-631 (IKCP…TCKG), 640-701 (VQCP…ACRA), and 702-763 (VKCS…TCQA). N-linked (GlcNAc...) asparagine glycosylation is found at N212 and N219. Residue N411 is glycosylated (N-linked (GlcNAc...) asparagine). Residue N460 is glycosylated (N-linked (GlcNAc...) asparagine). N-linked (GlcNAc...) asparagine glycosylation occurs at N518. N665 is a glycosylation site (N-linked (GlcNAc...) asparagine). 3 N-linked (GlcNAc...) asparagine glycosylation sites follow: N716, N723, and N741. Residues 772-795 (LTYFGGAVASTIGLIMGGTLLALL) form a helical membrane-spanning segment. Over 796-830 (RKRFRQKDDGKCPLNPHSHLGTYGVFTNAAFDPSP) the chain is Cytoplasmic. The S-palmitoyl cysteine; alternate moiety is linked to residue C807. A lipid anchor (S-stearoyl cysteine; alternate) is attached at C807. An Endocytosis signal motif is present at residues 818 to 821 (YGVF). Residues 821–830 (FTNAAFDPSP) form an interaction with SNX17 region.

It belongs to the selectin/LECAM family. As to quaternary structure, interacts with SNX17. Interacts with SELPLG/PSGL1 and PODXL2 and mediates neutrophil adhesion and leukocyte rolling. This interaction requires the sialyl-Lewis X epitope of SELPLG and PODXL2, and specific tyrosine sulfation on SELPLG. Interacts (via C-type lectin domain) with alpha-IIb/beta3 integrin ITGA2B:ITGB3 and alpha-V/beta-3 integrin ITGAV:ITGB3. Interacts with alpha5/beta1 integrin ITGA5:ITGB1 and alpha4/beta1 integrin ITGA4:ITGB. In terms of tissue distribution, stored in the alpha-granules of platelets and Weibel-Palade bodies of endothelial cells. Upon cell activation by agonists, P-selectin is transported rapidly to the cell surface.

The protein localises to the cell membrane. Ca(2+)-dependent receptor for myeloid cells that binds to carbohydrates on neutrophils and monocytes. Mediates the interaction of activated endothelial cells or platelets with leukocytes. The ligand recognized is sialyl-Lewis X. Mediates rapid rolling of leukocyte rolling over vascular surfaces during the initial steps in inflammation through interaction with SELPLG. Mediates cell-cell interactions and cell adhesion via the interaction with integrin alpha-IIb/beta3 (ITGA2B:ITGB3) and integrin alpha-V/beta-3 (ITGAV:ITGB3). The chain is P-selectin (SELP) from Homo sapiens (Human).